Consider the following 29-residue polypeptide: Galanin (29 aa).

A29 bears the Alanine amide mark.

It belongs to the galanin family.

Its subcellular location is the secreted. Functionally, contracts smooth muscle of the gastrointestinal and genitourinary tract, regulates growth hormone release, modulates insulin release, and may be involved in the control of adrenal secretion. This is Galanin (gal) from Pelophylax ridibundus (Marsh frog).